The following is a 293-amino-acid chain: METGTSRVKRGMAEMQKGGVIMDVMNAEQAKVAEAAGASAVMALERVPSDIRAAGGVARMADPTVLEEVMKVVSIPVMAKARIGHIVEARVLEALGADYIDESEVLTPADEVFHIDKKDFTVPFVCGAKDIGEALRRINEGASMLRTKGEPGTGNIVEAVRHMRLIQSQIRKIQSLAKDELYAEAKNLGAPYDLVLYIHENGKLPVVNFAAGGVATPSDAALMMELGADGVFVGSGIFKSDSPEKFARAIVEATTHYKDYKLIAEVSKNLGAPMKGIEISKLHASERMQDRGW.

Asp-23 contacts D-ribose 5-phosphate. The active-site Schiff-base intermediate with D-ribose 5-phosphate is Lys-80. Gly-152 is a binding site for D-ribose 5-phosphate. A D-glyceraldehyde 3-phosphate-binding site is contributed by Arg-164. D-ribose 5-phosphate-binding positions include Gly-213 and 234–235 (GS).

The protein belongs to the PdxS/SNZ family. As to quaternary structure, in the presence of PdxT, forms a dodecamer of heterodimers.

The catalysed reaction is aldehydo-D-ribose 5-phosphate + D-glyceraldehyde 3-phosphate + L-glutamine = pyridoxal 5'-phosphate + L-glutamate + phosphate + 3 H2O + H(+). It participates in cofactor biosynthesis; pyridoxal 5'-phosphate biosynthesis. Its function is as follows. Catalyzes the formation of pyridoxal 5'-phosphate from ribose 5-phosphate (RBP), glyceraldehyde 3-phosphate (G3P) and ammonia. The ammonia is provided by the PdxT subunit. Can also use ribulose 5-phosphate and dihydroxyacetone phosphate as substrates, resulting from enzyme-catalyzed isomerization of RBP and G3P, respectively. This is Pyridoxal 5'-phosphate synthase subunit PdxS from Niallia circulans (Bacillus circulans).